Consider the following 374-residue polypeptide: Tryptophan--tRNA ligase (374 aa).

A 'HIGH' region motif is present at residues 81–89 (PSGPVHIGH). Residues 258–262 (KMSAS) carry the 'KMSKS' region motif.

It belongs to the class-I aminoacyl-tRNA synthetase family.

Its subcellular location is the cytoplasm. It catalyses the reaction tRNA(Trp) + L-tryptophan + ATP = L-tryptophyl-tRNA(Trp) + AMP + diphosphate + H(+). This chain is Tryptophan--tRNA ligase, found in Pyrobaculum calidifontis (strain DSM 21063 / JCM 11548 / VA1).